A 191-amino-acid polypeptide reads, in one-letter code: dTTP/UTP pyrophosphatase (191 aa).

The active-site Proton acceptor is the Asp69.

Belongs to the Maf family. YhdE subfamily. A divalent metal cation is required as a cofactor.

It localises to the cytoplasm. The catalysed reaction is dTTP + H2O = dTMP + diphosphate + H(+). It catalyses the reaction UTP + H2O = UMP + diphosphate + H(+). In terms of biological role, nucleoside triphosphate pyrophosphatase that hydrolyzes dTTP and UTP. May have a dual role in cell division arrest and in preventing the incorporation of modified nucleotides into cellular nucleic acids. This is dTTP/UTP pyrophosphatase from Desulforamulus reducens (strain ATCC BAA-1160 / DSM 100696 / MI-1) (Desulfotomaculum reducens).